The chain runs to 152 residues: Putative superoxide dismutase [Cu-Zn] (152 aa).

Cu cation is bound by residues His-43, His-45, and His-60. An intrachain disulfide couples Cys-54 to Cys-144. Residues His-60, His-68, His-77, and Asp-80 each coordinate Zn(2+). Position 118 (His-118) interacts with Cu cation.

Belongs to the Cu-Zn superoxide dismutase family. Cu cation serves as cofactor. Zn(2+) is required as a cofactor.

It catalyses the reaction 2 superoxide + 2 H(+) = H2O2 + O2. Functionally, destroys radicals which are normally produced within the cells and which are toxic to biological systems. The chain is Putative superoxide dismutase [Cu-Zn] (SOD) from Orgyia pseudotsugata (Douglas-fir tussock moth).